A 144-amino-acid polypeptide reads, in one-letter code: Nucleoside diphosphate kinase (144 aa).

ATP contacts are provided by K11, F59, R87, T93, R104, and N114. Catalysis depends on H117, which acts as the Pros-phosphohistidine intermediate.

The protein belongs to the NDK family. As to quaternary structure, homotetramer. The cofactor is Mg(2+).

It localises to the cytoplasm. It catalyses the reaction a 2'-deoxyribonucleoside 5'-diphosphate + ATP = a 2'-deoxyribonucleoside 5'-triphosphate + ADP. It carries out the reaction a ribonucleoside 5'-diphosphate + ATP = a ribonucleoside 5'-triphosphate + ADP. In terms of biological role, major role in the synthesis of nucleoside triphosphates other than ATP. The ATP gamma phosphate is transferred to the NDP beta phosphate via a ping-pong mechanism, using a phosphorylated active-site intermediate. The chain is Nucleoside diphosphate kinase from Sorangium cellulosum (strain So ce56) (Polyangium cellulosum (strain So ce56)).